The chain runs to 329 residues: Isopenicillin N synthase (329 aa).

Residues Arg-87, Tyr-91, Ser-183, and Tyr-189 each coordinate isopenicillin N. N-[(5S)-5-amino-5-carboxypentanoyl]-L-cysteinyl-D-valine contacts are provided by Arg-87, Tyr-91, Ser-183, Tyr-189, His-212, and Asp-214. The region spanning 180–286 (SLSSVSLIRY…RLSLPFFLNG (107 aa)) is the Fe2OG dioxygenase domain. Fe(2+) is bound by residues His-212, Asp-214, and His-268. Arg-277 contacts 2-oxoglutarate. Residue Ser-279 coordinates isopenicillin N. Ser-279 lines the N-[(5S)-5-amino-5-carboxypentanoyl]-L-cysteinyl-D-valine pocket.

Belongs to the iron/ascorbate-dependent oxidoreductase family. It depends on Fe cation as a cofactor. The cofactor is L-ascorbate.

The catalysed reaction is N-[(5S)-5-amino-5-carboxypentanoyl]-L-cysteinyl-D-valine + O2 = isopenicillin N + 2 H2O. It functions in the pathway antibiotic biosynthesis; penicillin G biosynthesis; penicillin G from L-alpha-aminoadipate and L-cysteine and L-valine: step 2/3. Its function is as follows. Removes, in the presence of oxygen, 4 hydrogen atoms from delta-L-(alpha-aminoadipyl)-L-cysteinyl-D-valine (ACV) to form the azetidinone and thiazolidine rings of isopenicillin. This is Isopenicillin N synthase (pcbC) from Streptomyces clavuligerus.